A 158-amino-acid polypeptide reads, in one-letter code: Large ribosomal subunit protein uL15 (158 aa).

Residues 1 to 13 (MKLNEIKDNEGST) are compositionally biased toward basic and acidic residues. Residues 1–44 (MKLNEIKDNEGSTHSRKRLGRGIGSGSGKTAGRGVKGQKSRSGV) are disordered. The segment covering 21-35 (RGIGSGSGKTAGRGV) has biased composition (gly residues).

The protein belongs to the universal ribosomal protein uL15 family. In terms of assembly, part of the 50S ribosomal subunit.

Functionally, binds to the 23S rRNA. The sequence is that of Large ribosomal subunit protein uL15 from Rhizobium etli (strain ATCC 51251 / DSM 11541 / JCM 21823 / NBRC 15573 / CFN 42).